Reading from the N-terminus, the 546-residue chain is Smad protein daf-8 (546 aa).

Positions 16 to 137 constitute an MH1 domain; that stretch reads AMAQKVLEET…YRWVELPTCQ (122 aa). 2 disordered regions span residues 234-268 and 292-317; these read LQQSNRQDDEEPGYYRSGLSSPASHAASPREFIPN and ENFSSENNGNRKPTYADGRPITPIEP. The segment covering 292–302 has biased composition (polar residues); sequence ENFSSENNGNR. Positions 349–546 constitute an MH2 domain; it reads WLKLIYYEEG…APPRICSSRT (198 aa).

It belongs to the dwarfin/SMAD family. Homodimer. Interacts with R-SMAD daf-14 and co-SMAD daf-3. Interacts with orphan nuclear receptor nhr-69. As to expression, expressed in the excretory cell and gonadal distal tip cells (DTCs).

It localises to the cytoplasm. It is found in the nucleus. Probably a receptor-regulated SMAD (R-SMAD) that is an intracellular signal transducer and transcriptional modulator activated by TGF-beta-like daf-7 signaling. Plays a role in TGF-beta-like daf-7 signaling in regulating entry into a developmentally arrested larval state known as dauer, in response to harsh environmental conditions; partially redundant with R-SMAD daf-14. Plays a role in inhibiting mitosis and promoting a switch to meiosis in the germ line, perhaps by down-regulating lag-2 transcription in the gonadal distal tip cells (DTCs). In cooperation with orphan nuclear receptor nhr-69 modulates the Insulin/IGF-1-like signaling (IIS) pathway, perhaps by regulating expression of the potassium channel exp-2, which in turn modulates the secretion of the insulin-like peptide daf-28. In Caenorhabditis elegans, this protein is Smad protein daf-8.